The sequence spans 180 residues: Molybdopterin synthase catalytic subunit (180 aa).

Positions 1 to 10 (MSSTTPTTEP) are enriched in polar residues. Positions 1–31 (MSSTTPTTEPDQLPPHLDPQTYPRTTTNPTL) are disordered. Low complexity predominate over residues 21–31 (TYPRTTTNPTL). Residues 131-132 (HR), K147, and 154-156 (KKE) contribute to the substrate site.

This sequence belongs to the MoaE family. MOCS2B subfamily. Heterotetramer; composed of 2 small (MOCS2A) and 2 large (MOCS2B) subunits.

It is found in the cytoplasm. It catalyses the reaction 2 [molybdopterin-synthase sulfur-carrier protein]-C-terminal-Gly-aminoethanethioate + cyclic pyranopterin phosphate + H2O = molybdopterin + 2 [molybdopterin-synthase sulfur-carrier protein]-C-terminal Gly-Gly + 2 H(+). The protein operates within cofactor biosynthesis; molybdopterin biosynthesis. In terms of biological role, catalytic subunit of the molybdopterin synthase complex, a complex that catalyzes the conversion of precursor Z into molybdopterin. Acts by mediating the incorporation of 2 sulfur atoms from thiocarboxylated MOCS2A into precursor Z to generate a dithiolene group. The protein is Molybdopterin synthase catalytic subunit of Aspergillus niger (strain ATCC MYA-4892 / CBS 513.88 / FGSC A1513).